The sequence spans 522 residues: MKNLKINNRFTAELPADPDLTNETRQVKNTAFSYVNPTKPSNPKLIHASEETAALVGISKEEIHSEEFLNVFSGKEILPETQPYAMCYAGHQFGNWAGQLGDGRAINLTEVENNNTFYTLQLKGAGKTPYSRTADGLAVLRSSIREYLCAEAMYHLGVPTTRSLSLILSGDQVLRDILYNGNPAYEKGAVVCRVAPSFIRFGSFEMLAARNELKNLKQFVEYTIKHYFPEITGEPKEQYLQFFKKVADTTREMILHWQRVGFVHGVMNTDNMSVHGITIDYGPYGWLENYDPNWTPNTTDSQNKRYRFGNQPQVAHWNLYQLANAIYPLINETEGLEKILESFMDDFILDYKEMFLNKLGLFTSTETDNDLIDNLEAVLQLTETDMTIFFRNLSSVKKTDSVEKAIEKIQFAFYKIEEVSGEILDAWKKWFSVYLDRLNAEVLSDEVRLQKMNLINPKYVLRNYMAQLAIDAADKEDYSLVNELYTLLQKPYDEQPEYQKWFAKRPDWATSKVGCSMLSCSS.

8 residues coordinate ATP: Gly-101, Gly-103, Arg-104, Lys-123, Asp-135, Gly-136, Arg-193, and Arg-200. Catalysis depends on Asp-270, which acts as the Proton acceptor. Positions 271 and 280 each coordinate Mg(2+). ATP is bound at residue Asp-280.

The protein belongs to the SELO family. It depends on Mg(2+) as a cofactor. Requires Mn(2+) as cofactor.

The enzyme catalyses L-seryl-[protein] + ATP = 3-O-(5'-adenylyl)-L-seryl-[protein] + diphosphate. It carries out the reaction L-threonyl-[protein] + ATP = 3-O-(5'-adenylyl)-L-threonyl-[protein] + diphosphate. It catalyses the reaction L-tyrosyl-[protein] + ATP = O-(5'-adenylyl)-L-tyrosyl-[protein] + diphosphate. The catalysed reaction is L-histidyl-[protein] + UTP = N(tele)-(5'-uridylyl)-L-histidyl-[protein] + diphosphate. The enzyme catalyses L-seryl-[protein] + UTP = O-(5'-uridylyl)-L-seryl-[protein] + diphosphate. It carries out the reaction L-tyrosyl-[protein] + UTP = O-(5'-uridylyl)-L-tyrosyl-[protein] + diphosphate. In terms of biological role, nucleotidyltransferase involved in the post-translational modification of proteins. It can catalyze the addition of adenosine monophosphate (AMP) or uridine monophosphate (UMP) to a protein, resulting in modifications known as AMPylation and UMPylation. This Flavobacterium johnsoniae (strain ATCC 17061 / DSM 2064 / JCM 8514 / BCRC 14874 / CCUG 350202 / NBRC 14942 / NCIMB 11054 / UW101) (Cytophaga johnsonae) protein is Protein nucleotidyltransferase YdiU.